Here is a 487-residue protein sequence, read N- to C-terminus: Glutamyl-tRNA(Gln) amidotransferase subunit A (487 aa).

Residues lysine 79 and serine 154 each act as charge relay system in the active site. Serine 178 functions as the Acyl-ester intermediate in the catalytic mechanism.

Belongs to the amidase family. GatA subfamily. In terms of assembly, heterotrimer of A, B and C subunits.

It catalyses the reaction L-glutamyl-tRNA(Gln) + L-glutamine + ATP + H2O = L-glutaminyl-tRNA(Gln) + L-glutamate + ADP + phosphate + H(+). In terms of biological role, allows the formation of correctly charged Gln-tRNA(Gln) through the transamidation of misacylated Glu-tRNA(Gln) in organisms which lack glutaminyl-tRNA synthetase. The reaction takes place in the presence of glutamine and ATP through an activated gamma-phospho-Glu-tRNA(Gln). This chain is Glutamyl-tRNA(Gln) amidotransferase subunit A, found in Heliobacterium modesticaldum (strain ATCC 51547 / Ice1).